Here is a 170-residue protein sequence, read N- to C-terminus: Mitochondrial fission 1 protein A (170 aa).

The stretch at 90 to 123 (REKLYLLAVGYYRSGNYSRSRQLVDRCIEMQADW) is one TPR repeat. Residues 142–162 (VIGIGITATAFGAVGLIAGGI) traverse the membrane as a helical segment.

This sequence belongs to the FIS1 family. As to quaternary structure, interacts with ARC5.

Its subcellular location is the mitochondrion outer membrane. The protein resides in the peroxisome membrane. Its function is as follows. Component of the peroxisomal and mitochondrial division machineries. Plays a role in promoting the fission of mitochondria and peroxisomes. The sequence is that of Mitochondrial fission 1 protein A (FIS1A) from Arabidopsis thaliana (Mouse-ear cress).